We begin with the raw amino-acid sequence, 208 residues long: Ribosomal RNA large subunit methyltransferase E (208 aa).

S-adenosyl-L-methionine-binding residues include glycine 63, tryptophan 65, aspartate 83, aspartate 99, and aspartate 124. The active-site Proton acceptor is the lysine 164.

It belongs to the class I-like SAM-binding methyltransferase superfamily. RNA methyltransferase RlmE family.

Its subcellular location is the cytoplasm. It carries out the reaction uridine(2552) in 23S rRNA + S-adenosyl-L-methionine = 2'-O-methyluridine(2552) in 23S rRNA + S-adenosyl-L-homocysteine + H(+). Functionally, specifically methylates the uridine in position 2552 of 23S rRNA at the 2'-O position of the ribose in the fully assembled 50S ribosomal subunit. The protein is Ribosomal RNA large subunit methyltransferase E of Salmonella arizonae (strain ATCC BAA-731 / CDC346-86 / RSK2980).